The sequence spans 353 residues: Cruciform cutting endonuclease 1, mitochondrial (353 aa).

Mg(2+) contacts are provided by D293 and D294.

As to quaternary structure, homodimer. The cofactor is Mg(2+).

It is found in the mitochondrion. It carries out the reaction Endonucleolytic cleavage at a junction such as a reciprocal single-stranded crossover between two homologous DNA duplexes (Holliday junction).. Its function is as follows. Capable of resolving Holliday junctions. Specific for 4-way junctions. Seems to be important for the maintenance of mitochondrial DNA. Cleaves fixed junctions at the point of strand exchange. Cleaves after 5'-CT-3' sequence. In Saccharomyces cerevisiae (strain ATCC 204508 / S288c) (Baker's yeast), this protein is Cruciform cutting endonuclease 1, mitochondrial (CCE1).